The sequence spans 287 residues: MEKDIKKNEIENKNREKAFEIQNVSFSYDLVNNVLNDVSFDIYENEYVCIIGHNGSGKSTISKVLVGLLKPHQGNLKIFGETISYLNFFHLRTNVGIIFQNPDSQFIGLSAKDDIAFGLENRKINPSVMDDIIESASEVVDIKELLDKDSSSLSGGQKQRVAIASVLATNPRIIIFDESTSMLDPRGKMELKKIMLDLKNKANKTVISITHDMDEVLNADRVIVFKKGQIIRTGKPSEIFTDEEFLASSALDFPFILKLSKELKSKNVNVNFTINKEQLLDQICKKK.

Residues 19-252 (FEIQNVSFSY…EEFLASSALD (234 aa)) form the ABC transporter domain. Position 52-59 (52-59 (GHNGSGKS)) interacts with ATP.

The protein belongs to the ABC transporter superfamily. Energy-coupling factor EcfA family. Forms a stable energy-coupling factor (ECF) transporter complex composed of 2 membrane-embedded substrate-binding proteins (S component), 2 ATP-binding proteins (A component) and 2 transmembrane proteins (T component).

The protein resides in the cell membrane. Functionally, ATP-binding (A) component of a common energy-coupling factor (ECF) ABC-transporter complex. Unlike classic ABC transporters this ECF transporter provides the energy necessary to transport a number of different substrates. The polypeptide is Energy-coupling factor transporter ATP-binding protein EcfA (Malacoplasma penetrans (strain HF-2) (Mycoplasma penetrans)).